Reading from the N-terminus, the 446-residue chain is N-succinylarginine dihydrolase (446 aa).

Substrate-binding positions include 21–30 (AGLSWGNVAS), Asn112, and 139–140 (HR). The active site involves Glu176. Arg216 is a substrate binding site. The active site involves His252. The substrate site is built by Asp254 and Asn364. The active-site Nucleophile is Cys370.

The protein belongs to the succinylarginine dihydrolase family. In terms of assembly, homodimer.

The enzyme catalyses N(2)-succinyl-L-arginine + 2 H2O + 2 H(+) = N(2)-succinyl-L-ornithine + 2 NH4(+) + CO2. Its pathway is amino-acid degradation; L-arginine degradation via AST pathway; L-glutamate and succinate from L-arginine: step 2/5. Functionally, catalyzes the hydrolysis of N(2)-succinylarginine into N(2)-succinylornithine, ammonia and CO(2). This is N-succinylarginine dihydrolase from Marinobacter nauticus (strain ATCC 700491 / DSM 11845 / VT8) (Marinobacter aquaeolei).